The following is a 250-amino-acid chain: PF03932 family protein CutC (250 aa).

It belongs to the CutC family.

Its subcellular location is the cytoplasm. The polypeptide is PF03932 family protein CutC (Vibrio vulnificus (strain YJ016)).